The following is a 106-amino-acid chain: Putative double-stranded DNA mimic protein VV1228 (106 aa).

The protein belongs to the putative dsDNA mimic protein family.

In terms of biological role, may act as a double-stranded DNA (dsDNA) mimic. Probably regulates the activity of a dsDNA-binding protein. This is Putative double-stranded DNA mimic protein VV1228 from Vibrio vulnificus (strain YJ016).